The following is a 165-amino-acid chain: Small ribosomal subunit protein uS5 (165 aa).

The 64-residue stretch at 13–76 folds into the S5 DRBM domain; sequence LEEKVLVVNR…EAARKNLITI (64 aa).

The protein belongs to the universal ribosomal protein uS5 family. As to quaternary structure, part of the 30S ribosomal subunit. Contacts proteins S4 and S8.

With S4 and S12 plays an important role in translational accuracy. Functionally, located at the back of the 30S subunit body where it stabilizes the conformation of the head with respect to the body. The chain is Small ribosomal subunit protein uS5 from Chlamydia caviae (strain ATCC VR-813 / DSM 19441 / 03DC25 / GPIC) (Chlamydophila caviae).